We begin with the raw amino-acid sequence, 185 residues long: Phosphatidylglycerophosphatase GEP4, mitochondrial (185 aa).

A Phosphoryl acceptor motif is present at residues 45–49; the sequence is DKDNC.

It belongs to the GEP4 family.

It localises to the mitochondrion inner membrane. The enzyme catalyses a 1,2-diacyl-sn-glycero-3-phospho-(1'-sn-glycero-3'-phosphate) + H2O = a 1,2-diacyl-sn-glycero-3-phospho-(1'-sn-glycerol) + phosphate. It functions in the pathway phospholipid metabolism; phosphatidylglycerol biosynthesis; phosphatidylglycerol from CDP-diacylglycerol: step 2/2. In terms of biological role, phosphatidylglycerophosphatase involved in the biosynthesis of cardiolipin (CL), a unique dimeric phosphoglycerolipid predominantly present in mitochondrial membranes and which has important functions for cellular energy metabolism, mitochondrial dynamics and the initiation of apoptotic pathways. Required for the stability of respiratory chain supercomplexes and for growth at elevated temperature, in presence of ethidium bromide or in absence of prohibitins. This chain is Phosphatidylglycerophosphatase GEP4, mitochondrial (GEP4), found in Saccharomyces cerevisiae (strain ATCC 204508 / S288c) (Baker's yeast).